A 1316-amino-acid polypeptide reads, in one-letter code: DNA-directed RNA polymerase subunit beta' (1316 aa).

Residues Cys-60, Cys-62, Cys-75, and Cys-78 each contribute to the Zn(2+) site. Positions 535, 537, and 539 each coordinate Mg(2+). Zn(2+) contacts are provided by Cys-891, Cys-968, Cys-975, and Cys-978.

Belongs to the RNA polymerase beta' chain family. The RNAP catalytic core consists of 2 alpha, 1 beta, 1 beta' and 1 omega subunit. When a sigma factor is associated with the core the holoenzyme is formed, which can initiate transcription. Mg(2+) is required as a cofactor. The cofactor is Zn(2+).

The enzyme catalyses RNA(n) + a ribonucleoside 5'-triphosphate = RNA(n+1) + diphosphate. In terms of biological role, DNA-dependent RNA polymerase catalyzes the transcription of DNA into RNA using the four ribonucleoside triphosphates as substrates. The polypeptide is DNA-directed RNA polymerase subunit beta' (Mycobacterium tuberculosis (strain ATCC 25177 / H37Ra)).